A 439-amino-acid chain; its full sequence is Glutamate--tRNA ligase 2 (439 aa).

The short motif at 6–16 (PSPTGDMHIGN) is the 'HIGH' region element. Positions 232–236 (KMSKR) match the 'KMSKS' region motif. Residue Lys235 participates in ATP binding.

This sequence belongs to the class-I aminoacyl-tRNA synthetase family. Glutamate--tRNA ligase type 1 subfamily. As to quaternary structure, monomer.

It localises to the cytoplasm. The enzyme catalyses tRNA(Glu) + L-glutamate + ATP = L-glutamyl-tRNA(Glu) + AMP + diphosphate. Catalyzes the attachment of glutamate to tRNA(Glu) in a two-step reaction: glutamate is first activated by ATP to form Glu-AMP and then transferred to the acceptor end of tRNA(Glu). This is Glutamate--tRNA ligase 2 from Helicobacter pylori (strain P12).